Here is a 777-residue protein sequence, read N- to C-terminus: MEIDELTALGGLLHDIGKPVQRAGLYSGDHSTQGARFLRDLAENTGRAEYELLSLFSEFHHKGHMKNDELMIRRIKELSPERFGLTMEDVLNALWIVYEADNLASGEREEGQPQASRPLYSVFNPGKAYPWAELDFEKELPVPGDVFSIRSQDYRELVKRLWEELSKAKLRSDRLLPVLEKYLTFVSSVTSEGNIISLYDHMRMTSAIALAMLRAGCTAEDVRSGRCRKEKRFLLIEGDFSGIQDFIYRVSGKGTLKYLRARSAYLELIGWDVVLEILSRLGLTRANVVFNAGGHFMIIAQNTPDAVKELEEIRAKAVEWLYREFESDLYLAIEWEPVSGREFGREGGKNLFAEARKRLKHKLTVRKLKRFGEIKGLFEHGHTERLAECPVCGRELPEGKLEPSASDPETKVCPTCNRLVSLGGNLPKLLGFGRTAKNDAGVLVEGPFSGFVPYLQGGRPVGEQILVKNTLNPGEIPESAQFVPYFVADYFKKDPKGGVATFEELSMASTGTRRLGVMKGDVDRLGEFFSSMDSPSKLATASRFMDYFFKGYIGAIIEGKFGYIIGDVPSLRDWPEEPDIVVVYAGGDDFFIVGAWDQIFELAFRVRRAFNAYTGGKLTLSVGLGYFDERTPIYRMADVVSERLDTAKDEGRNRVFVVGRSRPLDGKHKLSYEWNHYEELWRTYAPRIYAGNGRLKGKLESKKGLLWKLLEIRELYVRDPNDVRWAYLTAYLLGRHGLSDLFPELVGIDTKAVERKEPQPVYWVDGVLKIVLMAVRR.

Positions 1–106 constitute an HD domain; it reads MEIDELTALG…VYEADNLASG (106 aa). The region spanning 513 to 660 is the GGDEF domain; the sequence is RRLGVMKGDV…GRNRVFVVGR (148 aa).

The protein belongs to the CRISPR-associated Cas10/Csm1 family. Probably part of the Csm effector complex, that includes Cas10, Csm2, Csm3, Csm4, Csm5 and mature crRNA. Will form a homodimer in solution, interacts with Csm4, which is a tighter, better association than the homodimeric Cas10 and uses the same interface for interaction. The cofactor is a divalent metal cation.

Its activity is regulated as follows. ssDNase activity is inhibited by EDTA. In terms of biological role, CRISPR (clustered regularly interspaced short palindromic repeat) is an adaptive immune system that provides protection against mobile genetic elements (viruses, transposable elements and conjugative plasmids). CRISPR clusters contain spacers, sequences complementary to antecedent mobile elements, and target invading nucleic acids. CRISPR clusters are transcribed and processed into CRISPR RNA (crRNA). The type III-A Csm effector complex binds crRNA and acts as a crRNA-guided RNase, DNase and cyclic oligoadenylate synthase; binding of target RNA cognate to the crRNA is required for all activities. Its function is as follows. A single-strand deoxyribonuclease (ssDNase) which digests linear and circular ssDNA; has 5'-3' and 3'-5' exonuclease activity as well as a less efficient endonuclease activity. Has a minimal size requirement; 100 nucleotide ssDNA (nt) is more efficiently digested than 50 or 25 nt ssDNA, while 14 nt ssDNA is not cleaved at all. It has no activity on dsDNA or ssRNA. Functionally, ssDNase activity is stimulated in the ternary Csm effector complex; binding of cognate target RNA activates the ssDNase, as the target RNA is degraded ssDNA activity decreases. When associated with the ternary Csm effector complex (the crRNA, Cas proteins and a cognate target ssRNA) synthesizes cyclic oligoadenylates (cOA) from ATP. cOAs are second messengers that stimulate the ssRNase activity of Csm6, inducing an antiviral state important for defense against invading nucleic acids. In Thermococcus onnurineus (strain NA1), this protein is CRISPR system single-strand-specific deoxyribonuclease Cas10/Csm1 (subtype III-A).